Reading from the N-terminus, the 74-residue chain is Probable molt-inhibiting hormone (74 aa).

Disulfide bonds link cysteine 6–cysteine 43, cysteine 23–cysteine 39, and cysteine 26–cysteine 52. Alanine 74 is modified (alanine amide).

It localises to the secreted. In terms of biological role, inhibits Y-organs where molting hormone (ecdysteroid) is secreted. A molting cycle is initiated when MIH secretion diminishes or stops. Has little or no hyperglycemic activity. This Jasus lalandii (Cape rock lobster) protein is Probable molt-inhibiting hormone.